We begin with the raw amino-acid sequence, 268 residues long: MFRMLNSSFEDDPFFSESILAHRENMRQMIRSFSEPFGRDLLSISDGRGRAHNRRGHNDGEDSLTHTDVSSFQTMDQMVSNMRNYMQKLERNFGQLSVDPNGHSFCSSSVMTYSKIGDEPPKVFQASTQTRRAPGGIKETRKAMRDSDSGLEKMAIGHHIHDRAHVIKKSKNKKTGDEEVNQEFINMNESDAHAFDEEWQSEVLKYKPGRHNLGNTRMRSVGHENPGSRELKRREKPQQSPAIEHGRRSNVLGDKLHIKGSSVKSNKK.

Residues S8, S32, and S34 each carry the phosphoserine modification. Disordered regions lie at residues 44-66 (ISDG…SLTH) and 209-268 (GRHN…SNKK). The interaction with COPS3 stretch occupies residues 50 to 125 (RAHNRRGHND…IGDEPPKVFQ (76 aa)). 2 stretches are compositionally biased toward basic and acidic residues: residues 56–65 (GHNDGEDSLT) and 226–237 (PGSRELKRREKP).

It belongs to the MLF family. As to quaternary structure, interacts with CENPU. Also interacts with NRBP1/MADM, YWHAZ/14-3-3-zeta and HNRPUL2/MANP. NRBP1 recruits a serine kinase which phosphorylates both itself and MLF1. Phosphorylated MLF1 then binds to YWHAZ and is retained in the cytoplasm. Retained in the nucleus by binding to HNRPUL2. Binds to COPS3/CSN3 which is required for suppression of COP1 and activation of p53. Post-translationally, phosphorylation is required for binding to YWHAZ. In terms of tissue distribution, most abundant in testis, ovary, skeletal muscle, heart, kidney and colon. Low expression in spleen, thymus and peripheral blood leukocytes.

The protein localises to the cytoplasm. It localises to the nucleus. Its subcellular location is the cell projection. The protein resides in the cilium. It is found in the cytoskeleton. The protein localises to the cilium basal body. Its function is as follows. Involved in lineage commitment of primary hemopoietic progenitors by restricting erythroid formation and enhancing myeloid formation. Interferes with erythropoietin-induced erythroid terminal differentiation by preventing cells from exiting the cell cycle through suppression of CDKN1B/p27Kip1 levels. Suppresses COP1 activity via CSN3 which activates p53 and induces cell cycle arrest. Binds DNA and affects the expression of a number of genes so may function as a transcription factor in the nucleus. This chain is Myeloid leukemia factor 1 (MLF1), found in Homo sapiens (Human).